The sequence spans 279 residues: Fatty acid metabolism regulator protein (279 aa).

The HTH gntR-type domain maps to K6–F74. Residues E34 to Q53 constitute a DNA-binding region (H-T-H motif).

In terms of assembly, homodimer.

Its subcellular location is the cytoplasm. Functionally, multifunctional regulator of fatty acid metabolism. This Vibrio vulnificus (strain CMCP6) protein is Fatty acid metabolism regulator protein.